The chain runs to 338 residues: Clavatol oxidase claD (338 aa).

Positions 193–299 constitute a Fe2OG dioxygenase domain; the sequence is DPMSLLRLLH…RYSVVFFYDG (107 aa). Fe cation contacts are provided by H222, D224, and H280. R290 contributes to the 2-oxoglutarate binding site.

This sequence belongs to the iron/ascorbate-dependent oxidoreductase family. Fe(2+) serves as cofactor.

The enzyme catalyses clavatol + 2-oxoglutarate + O2 = hydroxyclavatol + succinate + CO2. It participates in secondary metabolite biosynthesis. 2-oxoglutarate-dependent dioxygenase; part of the cla gene cluster that produces clavatol and ortho-quinone methide. The clavatol biosynthesis cluster cla and the terrestric acid cluster tra are both involved in the production of peniphenones and penilactones. The non-reducing PKS claF is responsible for the formation of clavatol from successive condensations of 3 malonyl-CoA units, presumably with a simple acetyl-CoA starter unit, and 2 methylation steps. The esterase claE probably collaborates with claF by catalyzing the hydrolysis of ACP-bound acyl intermediates to free the ACP from stalled intermediates. The clavatol oxidase claD then converts clavatol to hydroxyclavatol. Spontaneous dehydration of hydroxyclavatol leads to the accumulation of the highly active ortho-quinone methide. On the other hand, the PKS-NRPS hybrid traA is involved in the formation of crustosic acid, with the help of traB and traD. The polyketide synthase module (PKS) of traA is responsible for the synthesis of the polyketide backbone via the condensation of an acetyl-CoA starter unit with 3 malonyl-CoA units. The downstream nonribosomal peptide synthetase (NRPS) module then amidates the carboxyl end of the polyketide with L-malic acid. Because traA lacks a designated enoylreductase (ER) domain, the required activity is provided the enoyl reductase traG. Crustosic acid undergoes decarboxylation and isomerization to the terrestric acid, catalyzed by the 2-oxoglutarate-dependent dioxygenase traH. Both acids are further converted to the 2 gamma-butyrolactones (R)-5-methyltetronic acid and (S)-5-carboxylmethyltetronic acid, with involvement of the cytochrome P450 monooxygenase claJ. Spontaneous addition of the methide to these gamma-butyrolactones leads to peniphenone D and penilactone D, which undergo again stereospecific attacking by methide to give penilactones A and B. The sequence is that of Clavatol oxidase claD from Penicillium crustosum (Blue mold fungus).